A 529-amino-acid chain; its full sequence is MQQRRPVRRALLSVSDKAGIIEFAQALSARGVELLSTGGTARLLAEKGLPVTEVSDYTGFPEMMDGRVKTLHPKVHGGILGRRGQDDAIMEQHHIAPIDMVVVNLYPFAETVAREGCSLEDAVENIDIGGPTMVRSAAKNHKDVAIVVKSSDYDAIIKEMDANEGSLTLDTRFDLAIKAFEHTAAYDSMIANYFGSMVPAYHGESKEAAGRFPRTLNLNFIKKQDMRYGENSHQQAAFYIEENVKEASVATAQQVQGKALSYNNIADTDAALECVKEFNEPACVIVKHANPCGVAVSTSILDAYDRAYKTDPTSAFGGIIAFNRELDAETAQAIISRQFVEVIIAPSASEEALKITAAKQNVRVLTCGQWGERVPGLDFKRVNGGLLVQDRDLGMVSEAELRVVSKRQPTEQELRDALFCWKVAKFVKSNAIVYAKENMTIGIGAGQMSRVYSAKIAGIKAADEGLEVKGSAMASDAFFPFRDGIDAAAAVGVSCVIQPGGSIRDDEVIAAADEHGIAMIFTDMRHFRH.

Residues 1–148 form the MGS-like domain; the sequence is MQQRRPVRRA…KNHKDVAIVV (148 aa).

This sequence belongs to the PurH family.

It catalyses the reaction (6R)-10-formyltetrahydrofolate + 5-amino-1-(5-phospho-beta-D-ribosyl)imidazole-4-carboxamide = 5-formamido-1-(5-phospho-D-ribosyl)imidazole-4-carboxamide + (6S)-5,6,7,8-tetrahydrofolate. It carries out the reaction IMP + H2O = 5-formamido-1-(5-phospho-D-ribosyl)imidazole-4-carboxamide. It participates in purine metabolism; IMP biosynthesis via de novo pathway; 5-formamido-1-(5-phospho-D-ribosyl)imidazole-4-carboxamide from 5-amino-1-(5-phospho-D-ribosyl)imidazole-4-carboxamide (10-formyl THF route): step 1/1. It functions in the pathway purine metabolism; IMP biosynthesis via de novo pathway; IMP from 5-formamido-1-(5-phospho-D-ribosyl)imidazole-4-carboxamide: step 1/1. This is Bifunctional purine biosynthesis protein PurH from Salmonella paratyphi B (strain ATCC BAA-1250 / SPB7).